We begin with the raw amino-acid sequence, 584 residues long: MSRGDKMLKFEVKARDGAGRIGKLEVNGKKIETPAIMPVVNPKQLIVEPKELEKMGFDIIITNSYIIYKDRELREKALEVGIHKLLGYDGIIEVDSGSFQLMRYGNVDVSNREIVEFQHRIGVDIGTFLDIPTPPDAPKEKAMEDLKITLERAREAEEIKEIAMNAAIQGSTYTDLRRYAARRLSSMNFEIHPIGGVVPLLEAYRFREVVDIVISSKMALRPDRPVHLFGAGHPMVFALAVAMGVDLFDSASYALYAKDDRYLTPEGTKRLDELEYFPCSCPVCSRYTPQELREMPKEERARLLAIHNLWVIKEEIERIKQAIREGELWRLVDERARSHPKLYSAYKRLLDHYTFLEEFEPVTKKSAVFKISHESLRWPLVRRARERAERVNSKFGDLVEHPIFGKVTKYLTLTYPFAQSEAEDEFSIEKPTRENAIRYVMAIAEYQFGENASKAFEGAEVELARTGMPRQVKLNGKRLATVRAEDGFLTLGIEGAKRLHKVLEYPRMRVVVSEEAEPFARKGKDVFAKFVLFADPGIRPYDEVLVVNEKDELLATGQALMSGREMIVFQYGRAVKVRRGISGG.

Aspartate 95 serves as the catalytic Nucleophile. The substrate site is built by aspartate 130 and glycine 196. Residues cysteine 279, cysteine 281, and cysteine 284 each coordinate Zn(2+). Positions 507–582 constitute a PUA domain; sequence RMRVVVSEEA…RAVKVRRGIS (76 aa).

It belongs to the archaeosine tRNA-ribosyltransferase family. Zn(2+) is required as a cofactor.

It carries out the reaction guanosine(15) in tRNA + 7-cyano-7-deazaguanine = 7-cyano-7-carbaguanosine(15) in tRNA + guanine. The protein operates within tRNA modification; archaeosine-tRNA biosynthesis. Its function is as follows. Exchanges the guanine residue with 7-cyano-7-deazaguanine (preQ0) at position 15 in the dihydrouridine loop (D-loop) of archaeal tRNAs. This is tRNA-guanine(15) transglycosylase from Pyrococcus abyssi (strain GE5 / Orsay).